The sequence spans 404 residues: D-galactonate dehydratase family member PC1_0802 (404 aa).

Substrate contacts are provided by Asn-37 and His-122. Tyr-159 functions as the Proton donor/acceptor in the catalytic mechanism. Position 212 (Asp-212) interacts with Mg(2+). Residue His-214 is the Proton donor/acceptor of the active site. The Mg(2+) site is built by Glu-238 and Glu-264. Substrate-binding residues include Glu-264, Arg-285, His-314, Asp-318, and Glu-341.

The protein belongs to the mandelate racemase/muconate lactonizing enzyme family. GalD subfamily. Mg(2+) serves as cofactor.

It carries out the reaction D-mannonate = 2-dehydro-3-deoxy-D-gluconate + H2O. Has low D-mannonate dehydratase activity (in vitro), suggesting that this is not a physiological substrate and that it has no significant role in D-mannonate degradation in vivo. Has no detectable activity with a panel of 70 other acid sugars (in vitro). The chain is D-galactonate dehydratase family member PC1_0802 from Pectobacterium carotovorum subsp. carotovorum (strain PC1).